The following is a 92-amino-acid chain: Large ribosomal subunit protein bL34m (92 aa).

The N-terminal 46 residues, 1 to 46 (MALLAGSLLGPTSRSAALLGGRWLQPRAWLGFPDAWGLPTPQQARG), are a transit peptide targeting the mitochondrion. The span at 40-57 (TPQQARGKSRGNEYQPSN) shows a compositional bias: polar residues. A disordered region spans residues 40–63 (TPQQARGKSRGNEYQPSNIKRKNK). Serine 71 carries the phosphoserine modification.

This sequence belongs to the bacterial ribosomal protein bL34 family. As to quaternary structure, component of the mitochondrial ribosome large subunit (39S) which comprises a 16S rRNA and about 50 distinct proteins.

The protein resides in the mitochondrion. The chain is Large ribosomal subunit protein bL34m (MRPL34) from Macaca fascicularis (Crab-eating macaque).